A 512-amino-acid polypeptide reads, in one-letter code: NADH-quinone oxidoreductase subunit N (512 aa).

The next 14 helical transmembrane spans lie at 32–52, 57–77, 97–117, 126–146, 151–171, 186–206, 231–251, 264–284, 296–316, 324–344, 348–368, 392–412, 431–451, and 473–493; these read VLPA…SVLF, FIIV…AVFY, VLSF…AAIV, IEFP…TLMT, FILV…LIGM, FLLG…LFGG, IGLV…PYHA, VTGY…LILY, WAWL…LLAL, MLAY…SAGI, VLFY…ILAY, AIAI…GGFW, ILLI…LRIG, and VGVT…WFLL.

This sequence belongs to the complex I subunit 2 family. In terms of assembly, NDH-1 is composed of 14 different subunits. Subunits NuoA, H, J, K, L, M, N constitute the membrane sector of the complex.

It is found in the cell inner membrane. It catalyses the reaction a quinone + NADH + 5 H(+)(in) = a quinol + NAD(+) + 4 H(+)(out). Functionally, NDH-1 shuttles electrons from NADH, via FMN and iron-sulfur (Fe-S) centers, to quinones in the respiratory chain. The immediate electron acceptor for the enzyme in this species is believed to be ubiquinone. Couples the redox reaction to proton translocation (for every two electrons transferred, four hydrogen ions are translocated across the cytoplasmic membrane), and thus conserves the redox energy in a proton gradient. This chain is NADH-quinone oxidoreductase subunit N, found in Leptospira interrogans serogroup Icterohaemorrhagiae serovar Lai (strain 56601).